The primary structure comprises 181 residues: Adenine phosphoribosyltransferase (181 aa).

Belongs to the purine/pyrimidine phosphoribosyltransferase family. In terms of assembly, homodimer.

The protein localises to the cytoplasm. The enzyme catalyses AMP + diphosphate = 5-phospho-alpha-D-ribose 1-diphosphate + adenine. The protein operates within purine metabolism; AMP biosynthesis via salvage pathway; AMP from adenine: step 1/1. Functionally, catalyzes a salvage reaction resulting in the formation of AMP, that is energically less costly than de novo synthesis. The polypeptide is Adenine phosphoribosyltransferase (Colwellia psychrerythraea (strain 34H / ATCC BAA-681) (Vibrio psychroerythus)).